Reading from the N-terminus, the 155-residue chain is Ribosome maturation factor RimP (155 aa).

Belongs to the RimP family.

The protein resides in the cytoplasm. Required for maturation of 30S ribosomal subunits. This chain is Ribosome maturation factor RimP, found in Listeria monocytogenes serotype 4b (strain CLIP80459).